Consider the following 350-residue polypeptide: Ookinete surface protein PIMMS43 (350 aa).

Residues 1 to 24 form the signal peptide; sequence MIKLCTFLSLFLIFFFLNLNAING. A helical membrane pass occupies residues 330 to 350; sequence NSIASKLMSVFVFIAVIIYIL.

Forms multimers, perhaps with an unknown protein(s).

It is found in the membrane. Involved in ookinete evasion of the mosquito complement-like response, oocyst maturation, sporozoite development and infectivity. This chain is Ookinete surface protein PIMMS43, found in Plasmodium berghei (strain Anka).